The following is a 509-amino-acid chain: MYLEEKLHKIKKPIMVLGTSSGAGKSLTVTAICRILKNLAEQPIPFKGQNMSNNAWVDWEGGEMAYSQALQAFACGVNPSSEMNPILLKPQGNSVSEVIHLGKSIGTTSAKNYYQDWFIPGWEVIKKSLNSIYKKNPNCRLIIEGAGSPVEMNLKHRDLTNLKIAKYLKANCILVTDIERGGVFAQIIGTLELMKPEEKKLIKGIIINRFRGDLSLFEEGKKWIEEKTQIPVIGIVPWLNDSFPPEDSLDLLENKSRFTNAEIKVGIIKLPSISNFSDFDPLENEESILIEWIRESQNLKKYDFIILPGSKQTIKDQMFLEKTGLSHDLREYSNNKGHIIGICGGLQMLGTFLEDPFLKEGSKTFSEQKIKGIGLLPLRTTFFEEKLTRQISSESLWPCQSKINGFEIHNGQTELDNTQNSLKINPIFKDLNLGWYKENKEGGTIAGTYIHGIFENDIWRDQYINLIRMNKKLPALKKRTSSYKNKREKIIENLANEFNKHLNLSSLLN.

The GATase cobBQ-type domain maps to 262 to 459 (EIKVGIIKLP…IHGIFENDIW (198 aa)). Cys343 functions as the Nucleophile in the catalytic mechanism. Residue His451 is part of the active site.

It belongs to the CobB/CobQ family. CobQ subfamily.

Its pathway is cofactor biosynthesis; adenosylcobalamin biosynthesis. Its function is as follows. Catalyzes amidations at positions B, D, E, and G on adenosylcobyrinic A,C-diamide. NH(2) groups are provided by glutamine, and one molecule of ATP is hydrogenolyzed for each amidation. In Prochlorococcus marinus (strain MIT 9312), this protein is Cobyric acid synthase.